We begin with the raw amino-acid sequence, 459 residues long: Vanillin aminotransferase (459 aa).

Residues 115-116 and Asp-255 each bind pyridoxal 5'-phosphate; that span reads GS. Lys-284 carries the post-translational modification N6-(pyridoxal phosphate)lysine. 320-321 contributes to the pyridoxal 5'-phosphate binding site; it reads FT. Residues 428 to 459 are a coiled coil; it reads LSLEELDELIRIYGKALKDTEKRVEELKSQKK.

This sequence belongs to the class-III pyridoxal-phosphate-dependent aminotransferase family. As to expression, expressed in placental tissue of immature fruit.

It carries out the reaction vanillin + L-alanine = vanillylamine + pyruvate. Its pathway is aromatic compound metabolism; phenylpropanoid biosynthesis. Involved in the biosynthesis of capsaicinoids natural products, pungent alkaloids synthesized from phenylpropanoid intermediates in the placental tissue of chili pepper fruit acting as repellant on herbivorous mammals and conferring spiciness to hot peppers. Can transfer an amine from vanillylamine to pyruvate forming vanillin and L-alanine. Can use pyruvate or oxaloacetate, but not 2-oxoglutarate as amino group acceptors. Is able to convert (S)-1-phenylethylamine into acetophenone in vitro. The polypeptide is Vanillin aminotransferase (Capsicum chinense (Scotch bonnet)).